We begin with the raw amino-acid sequence, 371 residues long: Probable tRNA sulfurtransferase (371 aa).

The region spanning 54-156 (NANIEALSEV…NEMTYFYHKV (103 aa)) is the THUMP domain. Residues 174 to 175 (LF), 199 to 200 (NF), Lys-254, Gly-276, and Gln-285 contribute to the ATP site.

Belongs to the ThiI family.

It is found in the cytoplasm. It catalyses the reaction [ThiI sulfur-carrier protein]-S-sulfanyl-L-cysteine + a uridine in tRNA + 2 reduced [2Fe-2S]-[ferredoxin] + ATP + H(+) = [ThiI sulfur-carrier protein]-L-cysteine + a 4-thiouridine in tRNA + 2 oxidized [2Fe-2S]-[ferredoxin] + AMP + diphosphate. The catalysed reaction is [ThiS sulfur-carrier protein]-C-terminal Gly-Gly-AMP + S-sulfanyl-L-cysteinyl-[cysteine desulfurase] + AH2 = [ThiS sulfur-carrier protein]-C-terminal-Gly-aminoethanethioate + L-cysteinyl-[cysteine desulfurase] + A + AMP + 2 H(+). Its pathway is cofactor biosynthesis; thiamine diphosphate biosynthesis. Functionally, catalyzes the ATP-dependent transfer of a sulfur to tRNA to produce 4-thiouridine in position 8 of tRNAs, which functions as a near-UV photosensor. Also catalyzes the transfer of sulfur to the sulfur carrier protein ThiS, forming ThiS-thiocarboxylate. This is a step in the synthesis of thiazole, in the thiamine biosynthesis pathway. The sulfur is donated as persulfide by IscS. The chain is Probable tRNA sulfurtransferase from Saccharolobus solfataricus (strain ATCC 35092 / DSM 1617 / JCM 11322 / P2) (Sulfolobus solfataricus).